Consider the following 311-residue polypeptide: Coproporphyrin III ferrochelatase 1 (311 aa).

Fe-coproporphyrin III contacts are provided by residues Y12, R29, 45 to 46 (RY), S53, and Y124. 2 residues coordinate Fe(2+): H182 and E263.

It belongs to the ferrochelatase family.

Its subcellular location is the cytoplasm. It carries out the reaction Fe-coproporphyrin III + 2 H(+) = coproporphyrin III + Fe(2+). The protein operates within porphyrin-containing compound metabolism; protoheme biosynthesis. In terms of biological role, involved in coproporphyrin-dependent heme b biosynthesis. Catalyzes the insertion of ferrous iron into coproporphyrin III to form Fe-coproporphyrin III. In Bacillus cereus (strain ATCC 14579 / DSM 31 / CCUG 7414 / JCM 2152 / NBRC 15305 / NCIMB 9373 / NCTC 2599 / NRRL B-3711), this protein is Coproporphyrin III ferrochelatase 1.